Reading from the N-terminus, the 347-residue chain is Phosphate acyltransferase (347 aa).

The protein belongs to the PlsX family. Homodimer. Probably interacts with PlsY.

The protein resides in the cytoplasm. The catalysed reaction is a fatty acyl-[ACP] + phosphate = an acyl phosphate + holo-[ACP]. It functions in the pathway lipid metabolism; phospholipid metabolism. Functionally, catalyzes the reversible formation of acyl-phosphate (acyl-PO(4)) from acyl-[acyl-carrier-protein] (acyl-ACP). This enzyme utilizes acyl-ACP as fatty acyl donor, but not acyl-CoA. This chain is Phosphate acyltransferase, found in Lawsonia intracellularis (strain PHE/MN1-00).